The sequence spans 421 residues: Gamma-glutamyl phosphate reductase (421 aa).

It belongs to the gamma-glutamyl phosphate reductase family.

The protein resides in the cytoplasm. It carries out the reaction L-glutamate 5-semialdehyde + phosphate + NADP(+) = L-glutamyl 5-phosphate + NADPH + H(+). It participates in amino-acid biosynthesis; L-proline biosynthesis; L-glutamate 5-semialdehyde from L-glutamate: step 2/2. In terms of biological role, catalyzes the NADPH-dependent reduction of L-glutamate 5-phosphate into L-glutamate 5-semialdehyde and phosphate. The product spontaneously undergoes cyclization to form 1-pyrroline-5-carboxylate. The polypeptide is Gamma-glutamyl phosphate reductase (Azotobacter vinelandii (strain DJ / ATCC BAA-1303)).